A 276-amino-acid chain; its full sequence is 3-methyl-2-oxobutanoate hydroxymethyltransferase (276 aa).

Aspartate 50 and aspartate 89 together coordinate Mg(2+). Residues 50 to 51 (DS), aspartate 89, and lysine 119 contribute to the 3-methyl-2-oxobutanoate site. Position 121 (glutamate 121) interacts with Mg(2+). Glutamate 188 serves as the catalytic Proton acceptor.

Belongs to the PanB family. Homodecamer; pentamer of dimers. The cofactor is Mg(2+).

The protein resides in the cytoplasm. It catalyses the reaction 3-methyl-2-oxobutanoate + (6R)-5,10-methylene-5,6,7,8-tetrahydrofolate + H2O = 2-dehydropantoate + (6S)-5,6,7,8-tetrahydrofolate. Its pathway is cofactor biosynthesis; (R)-pantothenate biosynthesis; (R)-pantoate from 3-methyl-2-oxobutanoate: step 1/2. Its function is as follows. Catalyzes the reversible reaction in which hydroxymethyl group from 5,10-methylenetetrahydrofolate is transferred onto alpha-ketoisovalerate to form ketopantoate. The sequence is that of 3-methyl-2-oxobutanoate hydroxymethyltransferase from Paracoccus denitrificans (strain Pd 1222).